A 194-amino-acid polypeptide reads, in one-letter code: Large ribosomal subunit protein eL15 (194 aa).

The disordered stretch occupies residues 161-194 (GLTSAGKKGRGLMYKGKGAEKARPSVRANGKKTK).

Belongs to the eukaryotic ribosomal protein eL15 family.

This is Large ribosomal subunit protein eL15 from Methanococcus maripaludis (strain C5 / ATCC BAA-1333).